The chain runs to 172 residues: Large ribosomal subunit protein uL10 (172 aa).

Belongs to the universal ribosomal protein uL10 family. In terms of assembly, part of the ribosomal stalk of the 50S ribosomal subunit. The N-terminus interacts with L11 and the large rRNA to form the base of the stalk. The C-terminus forms an elongated spine to which L12 dimers bind in a sequential fashion forming a multimeric L10(L12)X complex.

In terms of biological role, forms part of the ribosomal stalk, playing a central role in the interaction of the ribosome with GTP-bound translation factors. This Rhodopseudomonas palustris (strain HaA2) protein is Large ribosomal subunit protein uL10.